The following is a 153-amino-acid chain: Prostaglandin E synthase (153 aa).

Residues 1–13 lie on the Lumenal side of the membrane; that stretch reads MPPSGLELMNGQV. A helical membrane pass occupies residues 14–42; sequence LPAFLLCSALLVIKMYVVAVITGQVRLRK. Arg39 provides a ligand contact to glutathione. The Cytoplasmic segment spans residues 43-61; the sequence is KAFANPEDAQRHGGLQYCR. A helical membrane pass occupies residues 62–91; it reads NDPDVERCLRAHRNDMETIYPFLFLGFVYS. 74-78 is a glutathione binding site; it reads RNDME. The Lumenal portion of the chain corresponds to 92–96; that stretch reads FLGPN. Residues 97–120 form a helical membrane-spanning segment; it reads PFVARMHFLVFFLGRMVHTVAYLG. Residues His114 and Tyr118 each coordinate glutathione. The Cytoplasmic segment spans residues 121-124; that stretch reads KLRA. Residues 125–153 traverse the membrane as a helical segment; that stretch reads PTRSLAYTLAQLPCASMALQIVWEAARHL. Residue 127-131 coordinates glutathione; the sequence is RSLAY.

Belongs to the MAPEG family. Homotrimer. Requires glutathione as cofactor.

Its subcellular location is the membrane. The protein localises to the cytoplasm. It localises to the perinuclear region. It carries out the reaction prostaglandin H2 = prostaglandin E2. The enzyme catalyses 2-glyceryl-prostaglandin H2 = 2-glyceryl-prostaglandin E2. The catalysed reaction is prostaglandin G2 = (15S)-15-hydroperoxy-prostaglandin E2. It catalyses the reaction 1-chloro-2,4-dinitrobenzene + glutathione = 2,4-dinitrophenyl-S-glutathione + chloride + H(+). It carries out the reaction (5S)-hydroperoxy-(6E,8Z,11Z,14Z)-eicosatetraenoate + 2 glutathione = (5S)-hydroxy-(6E,8Z,11Z,14Z)-eicosatetraenoate + glutathione disulfide + H2O. It participates in lipid metabolism; prostaglandin biosynthesis. Terminal enzyme of the cyclooxygenase (COX)-2-mediated prostaglandin E2 (PGE2) biosynthetic pathway. Catalyzes the glutathione-dependent oxidoreduction of prostaglandin endoperoxide H2 (PGH2) to prostaglandin E2 (PGE2) in response to inflammatory stimuli. Plays a key role in inflammation response, fever and pain. Also catalyzes the oxidoreduction of endocannabinoids into prostaglandin glycerol esters and PGG2 into 15-hydroperoxy-PGE2. In addition, displays low glutathione transferase and glutathione-dependent peroxidase activities, toward 1-chloro-2,4-dinitrobenzene and 5-hydroperoxyicosatetraenoic acid (5-HPETE), respectively. This chain is Prostaglandin E synthase (PTGES), found in Bos taurus (Bovine).